Here is a 581-residue protein sequence, read N- to C-terminus: Potassium-transporting ATPase potassium-binding subunit (581 aa).

The next 12 helical transmembrane spans lie at 2 to 22, 74 to 94, 135 to 155, 177 to 197, 255 to 275, 284 to 304, 332 to 352, 357 to 377, 381 to 401, 421 to 441, 501 to 521, and 550 to 570; these read LQGW…TPFF, AVIA…PLNP, GLGY…IAFI, ILLP…VPET, LVQL…YGVF, LIYL…AIGE, WAQS…AVIA, LMPN…VFGG, GTAY…LMVG, FLIL…ALAF, LSAC…LLLL, and AGVI…LGPI.

Belongs to the KdpA family. In terms of assembly, the system is composed of three essential subunits: KdpA, KdpB and KdpC.

The protein resides in the cell inner membrane. Functionally, part of the high-affinity ATP-driven potassium transport (or Kdp) system, which catalyzes the hydrolysis of ATP coupled with the electrogenic transport of potassium into the cytoplasm. This subunit binds the periplasmic potassium ions and delivers the ions to the membrane domain of KdpB through an intramembrane tunnel. The chain is Potassium-transporting ATPase potassium-binding subunit from Microcystis aeruginosa (strain NIES-843 / IAM M-2473).